The primary structure comprises 927 residues: Probable dipeptidyl-aminopeptidase B (927 aa).

2 disordered regions span residues 1-44 (MAPA…TTSI) and 58-101 (GHFE…KNDG). Residues 1–108 (MAPAPGMAPY…NDGMNRGMRR (108 aa)) are Cytoplasmic-facing. Basic and acidic residues-rich tracts occupy residues 19 to 36 (HRPE…HESE) and 58 to 70 (GHFE…PMKE). Residues 109–129 (TLIIVAGLLISAWVVGLFFYV) traverse the membrane as a helical; Signal-anchor for type II membrane protein segment. Topologically, residues 130–927 (SHKSYKPASQ…RSIQPILPIL (798 aa)) are vacuolar. Residues Asn365 and Asn530 are each glycosylated (N-linked (GlcNAc...) asparagine). Ser769 functions as the Charge relay system in the catalytic mechanism. Asn828 is a glycosylation site (N-linked (GlcNAc...) asparagine). Catalysis depends on charge relay system residues Asp846 and His879.

This sequence belongs to the peptidase S9B family.

The protein resides in the vacuole membrane. It carries out the reaction Release of an N-terminal dipeptide, Xaa-Yaa-|-Zaa-, from a polypeptide, preferentially when Yaa is Pro, provided Zaa is neither Pro nor hydroxyproline.. In terms of biological role, type IV dipeptidyl-peptidase which removes N-terminal dipeptides sequentially from polypeptides having unsubstituted N-termini provided that the penultimate residue is proline. The chain is Probable dipeptidyl-aminopeptidase B (DAPB) from Podospora anserina (strain S / ATCC MYA-4624 / DSM 980 / FGSC 10383) (Pleurage anserina).